The primary structure comprises 93 residues: Pyrimidine/purine nucleoside phosphorylase (93 aa).

This sequence belongs to the nucleoside phosphorylase PpnP family.

It carries out the reaction a purine D-ribonucleoside + phosphate = a purine nucleobase + alpha-D-ribose 1-phosphate. The catalysed reaction is adenosine + phosphate = alpha-D-ribose 1-phosphate + adenine. The enzyme catalyses cytidine + phosphate = cytosine + alpha-D-ribose 1-phosphate. It catalyses the reaction guanosine + phosphate = alpha-D-ribose 1-phosphate + guanine. It carries out the reaction inosine + phosphate = alpha-D-ribose 1-phosphate + hypoxanthine. The catalysed reaction is thymidine + phosphate = 2-deoxy-alpha-D-ribose 1-phosphate + thymine. The enzyme catalyses uridine + phosphate = alpha-D-ribose 1-phosphate + uracil. It catalyses the reaction xanthosine + phosphate = alpha-D-ribose 1-phosphate + xanthine. In terms of biological role, catalyzes the phosphorolysis of diverse nucleosides, yielding D-ribose 1-phosphate and the respective free bases. Can use uridine, adenosine, guanosine, cytidine, thymidine, inosine and xanthosine as substrates. Also catalyzes the reverse reactions. This Pseudomonas savastanoi pv. phaseolicola (strain 1448A / Race 6) (Pseudomonas syringae pv. phaseolicola (strain 1448A / Race 6)) protein is Pyrimidine/purine nucleoside phosphorylase.